Here is a 161-residue protein sequence, read N- to C-terminus: Nucleotide-binding protein BamMC406_2474 (161 aa).

This sequence belongs to the YajQ family.

Nucleotide-binding protein. The chain is Nucleotide-binding protein BamMC406_2474 from Burkholderia ambifaria (strain MC40-6).